The chain runs to 491 residues: Anhydromuropeptide permease (491 aa).

Over 1 to 11 (MSSQYLRIFQQ) the chain is Cytoplasmic. A helical transmembrane segment spans residues 12–32 (PRSAILLILGFASGLPLALTS). Residues 33–47 (GTLQAWMTVENIDLK) lie on the Periplasmic side of the membrane. The helical transmembrane segment at 48–61 (TIGFFSLVGQAYVF) threads the bilayer. Topologically, residues 62–81 (KFLWSPLMDRYTPPFFGRRR) are cytoplasmic. The helical transmembrane segment at 82–105 (GWLLATQILLLVAIAAMGFLEPGT) threads the bilayer. Position 106 (glutamine 106) is a topological domain, periplasmic. The chain crosses the membrane as a helical span at residues 107-124 (LRWMAALAVVIAFCSASQ). Residues 125-221 (DIVFDAWKTD…VAPLRDFFGR (97 aa)) are Cytoplasmic-facing. Residues 222 to 240 (NNAWLILLLIVLYKLGDAF) traverse the membrane as a helical segment. Topologically, residues 241–264 (AMSLTTTFLIRGVGFDAGEVGVVN) are periplasmic. The chain crosses the membrane as a helical span at residues 265 to 284 (KTLGLLATIVGALYGGILMQ). Over 285 to 287 (RLS) the chain is Cytoplasmic. Residues 288–303 (LFRALLIFGILQGASN) traverse the membrane as a helical segment. Over 304–327 (AGYWLLSITDKHLYSMGAAVFFEN) the chain is Periplasmic. Residues 328–346 (LCGGMGTSAFVALLMTLCN) form a helical membrane-spanning segment. Residues 347-421 (KSFSATQFAL…NDNFISRTAY (75 aa)) are Cytoplasmic-facing. A helical transmembrane segment spans residues 422–453 (PAGYAFAMWTLAAGVSLLAVWLLLLTMDALDL). Residues 454–457 (THFS) lie on the Periplasmic side of the membrane. A helical transmembrane segment spans residues 458–485 (FLPALLEVGVLVALSGVVLGGLLDYLAL). Residues 486–491 (RKTHLT) are Cytoplasmic-facing.

The protein belongs to the major facilitator superfamily.

Its subcellular location is the cell inner membrane. Its function is as follows. Permease involved in cell wall peptidoglycan recycling. Transports, from the periplasm into the cytoplasm, the disaccharide N-acetylglucosaminyl-beta-1,4-anhydro-N-acetylmuramic acid (GlcNAc-anhMurNAc) and GlcNAc-anhMurNAc-peptides. Transport is dependent on the proton motive force. This chain is Anhydromuropeptide permease (ampG), found in Escherichia coli O157:H7.